The chain runs to 892 residues: Alanine--tRNA ligase (892 aa).

4 residues coordinate Zn(2+): H578, H582, C681, and H685.

The protein belongs to the class-II aminoacyl-tRNA synthetase family. Zn(2+) serves as cofactor.

It localises to the cytoplasm. The catalysed reaction is tRNA(Ala) + L-alanine + ATP = L-alanyl-tRNA(Ala) + AMP + diphosphate. Catalyzes the attachment of alanine to tRNA(Ala) in a two-step reaction: alanine is first activated by ATP to form Ala-AMP and then transferred to the acceptor end of tRNA(Ala). Also edits incorrectly charged Ser-tRNA(Ala) and Gly-tRNA(Ala) via its editing domain. In Cutibacterium acnes (strain DSM 16379 / KPA171202) (Propionibacterium acnes), this protein is Alanine--tRNA ligase.